The following is a 98-amino-acid chain: Large ribosomal subunit protein uL23c (98 aa).

It belongs to the universal ribosomal protein uL23 family. Part of the 50S ribosomal subunit.

The protein localises to the plastid. Its function is as follows. Binds to 23S rRNA. In Euglena longa (Euglenophycean alga), this protein is Large ribosomal subunit protein uL23c (rpl23).